Here is a 736-residue protein sequence, read N- to C-terminus: Gingipain R2 (736 aa).

An N-terminal signal peptide occupies residues 1–24; it reads MKKNFSRIVSIVAFSSLLGGMAFA. The propeptide occupies 25–229; it reads QPAERGRNPQ…SVFMNYEATR (205 aa). Positions 307, 329, 332, 334, 336, 390, and 395 each coordinate Ca(2+). His440 functions as the Proton donor in the catalytic mechanism. Residue Cys473 is the Nucleophile of the active site. Positions 478, 487, 521, 522, 525, 531, 613, and 639 each coordinate Ca(2+).

The protein belongs to the peptidase C25 family.

The protein resides in the secreted. The enzyme catalyses Hydrolysis of proteins and small molecule substrates, with a preference for Arg in P1.. Thiol protease. Acts synergistically with RgpA to catalyze the maturation of fimbrial subunits, such as FimA. Its proteolytic activity is a major factor in both periodontal tissue destruction and in evasion of host defense mechanisms. This is Gingipain R2 from Porphyromonas gingivalis (strain ATCC 33277 / DSM 20709 / CIP 103683 / JCM 12257 / NCTC 11834 / 2561).